We begin with the raw amino-acid sequence, 529 residues long: Bifunctional purine biosynthesis protein PurH (529 aa).

Residues 2–149 (TDLVPLRRAL…KNHSFVTVLT (148 aa)) enclose the MGS-like domain.

Belongs to the PurH family.

It carries out the reaction (6R)-10-formyltetrahydrofolate + 5-amino-1-(5-phospho-beta-D-ribosyl)imidazole-4-carboxamide = 5-formamido-1-(5-phospho-D-ribosyl)imidazole-4-carboxamide + (6S)-5,6,7,8-tetrahydrofolate. The catalysed reaction is IMP + H2O = 5-formamido-1-(5-phospho-D-ribosyl)imidazole-4-carboxamide. It functions in the pathway purine metabolism; IMP biosynthesis via de novo pathway; 5-formamido-1-(5-phospho-D-ribosyl)imidazole-4-carboxamide from 5-amino-1-(5-phospho-D-ribosyl)imidazole-4-carboxamide (10-formyl THF route): step 1/1. Its pathway is purine metabolism; IMP biosynthesis via de novo pathway; IMP from 5-formamido-1-(5-phospho-D-ribosyl)imidazole-4-carboxamide: step 1/1. The sequence is that of Bifunctional purine biosynthesis protein PurH from Dinoroseobacter shibae (strain DSM 16493 / NCIMB 14021 / DFL 12).